A 400-amino-acid polypeptide reads, in one-letter code: Zinc finger CCHC domain-containing protein 3 (400 aa).

A disordered region spans residues 1–157 (MATGGGAEEE…LQDEPPAAGP (157 aa)). Composition is skewed to basic and acidic residues over residues 26-38 (ARVE…REKM) and 47-63 (LAEK…RDET). Residues 66–75 (GASGGLGSPG) are compositionally biased toward gly residues. A compositionally biased stretch (basic and acidic residues) spans 91–109 (GDPKGRRRDPTGEASDAYR). Y198 is modified (phosphotyrosine). 2 consecutive CCHC-type zinc fingers follow at residues 349-365 (RCFR…YCRK) and 369-384 (CNLC…QCPK).

As to quaternary structure, interacts with CGAS. Interacts with RIGI. Interacts with IFIH1/MDA5.

The protein localises to the cytoplasm. Nucleic acid-binding protein involved in innate immune response to DNA and RNA viruses. Binds DNA and RNA in the cytoplasm and acts by promoting recognition of viral nucleic acids by virus sensors, such as RIGI, IFIH1/MDA5 and CGAS. Acts as a co-sensor for recognition of double-stranded DNA (dsDNA) by cGAS in the cytoplasm, thereby playing a role in innate immune response to cytosolic dsDNA and DNA virus. Binds dsDNA and probably acts by promoting sensing of dsDNA by CGAS, leading to enhance CGAS oligomerization and activation. Promotes sensing of viral RNA by RIG-I-like receptors proteins RIGI and IFIH1/MDA5 via two mechanisms: binds double-stranded RNA (dsRNA), enhancing the binding of RIGI and IFIH1/MDA5 to dsRNA and promotes 'Lys-63'-linked ubiquitination and subsequent activation of RIGI and IFIH1/MDA5. This Mus musculus (Mouse) protein is Zinc finger CCHC domain-containing protein 3.